The primary structure comprises 271 residues: Coiled-coil domain-containing protein ORF29 (271 aa).

Residues 1 to 39 (MNEKTESEIFEEQNSLYKPIKQEKKTPSTPESEDKNDQS) are disordered. The segment covering 20–37 (IKQEKKTPSTPESEDKND) has biased composition (basic and acidic residues). The stretch at 208–228 (RATQTQEILLNSLRKNLQMLE) forms a coiled coil.

This chain is Coiled-coil domain-containing protein ORF29, found in Helicobacter pylori (strain 35A).